The sequence spans 1029 residues: Ig-like and fibronectin type-III domain-containing protein 1 (1029 aa).

The first 22 residues, 1–22 (MCNVAEDPSSFSTITIATTCRA), serve as a signal peptide directing secretion. At 23-918 (EWPKVSPCIA…RRSASKGSSS (896 aa)) the chain is on the extracellular side. N-linked (GlcNAc...) asparagine glycans are attached at residues N36, N93, N120, and N165. The region spanning 90-181 (APGNVTISEL…TAKLFSTLPT (92 aa)) is the Fibronectin type-III 1 domain. The WR1 domain occupies 185 to 227 (PLCTIGEPIYMNDGRVMICDAVNPCPNGFRCTGAGSDLSYCCP). 7 N-linked (GlcNAc...) asparagine glycosylation sites follow: N257, N374, N409, N442, N482, N507, and N552. Fibronectin type-III domains follow at residues 330-417 (AVRN…TKPA) and 427-523 (APEK…AQKD). The Ig-like C2-type domain occupies 619-710 (ASVTMKKDKI…SRVEASSEVI (92 aa)). Residues C640 and C693 are joined by a disulfide bond. N753 carries N-linked (GlcNAc...) asparagine glycosylation. The 93-residue stretch at 817 to 909 (APSEVSNVRI…SAIPKDSEPR (93 aa)) folds into the Fibronectin type-III 4 domain. Residues 919-939 (AFWIVVILVVFGVLIAGLAVL) traverse the membrane as a helical segment. The Cytoplasmic portion of the chain corresponds to 940-1029 (SKRRELPYPI…NGMRYAKLET (90 aa)). Residues 988-1021 (SATTGTAAATQSEWQSANLEANSTTDNSHEYRNG) form a disordered region. Over residues 998 to 1013 (QSEWQSANLEANSTTD) the composition is skewed to polar residues.

It localises to the cell membrane. The protein is Ig-like and fibronectin type-III domain-containing protein 1 of Caenorhabditis elegans.